The primary structure comprises 717 residues: Segment polarity protein dishevelled homolog DVL-3 (717 aa).

Residues 1–82 (MGETKVIYHL…RVVCWLVSAD (82 aa)) form the DIX domain. A disordered region spans residues 89-235 (GSVCADIQSD…PQIERSSSFS (147 aa)). The segment covering 118 to 127 (HPNTRGSQEN) has biased composition (polar residues). The segment covering 140–155 (ARRERPGRKETSEHAT) has biased composition (basic and acidic residues). A compositionally biased stretch (low complexity) spans 173 to 189 (ESSSTLMSSELDSTSFF). Polar residues predominate over residues 199 to 210 (RFSNSTEQSSAS). The segment covering 212 to 224 (LMRRHKRRRRKPK) has biased composition (basic residues). In terms of domain architecture, PDZ spans 248–333 (TVTLNMEKYN…KPGPITLTVA (86 aa)). A DEP domain is found at 421 to 495 (SESGLEVRDR…SEQCYYIFGD (75 aa)). The segment at 552-653 (PDPAYIYGGG…THQSFGPPGI (102 aa)) is disordered. The span at 564-579 (GSQHSEGSRSSGSNRS) shows a compositional bias: low complexity. Basic and acidic residues-rich tracts occupy residues 580–593 (STEKRKDRETKGGD) and 602–618 (ESDHTTRSSLRRDRAAS). Positions 629-645 (HRSHHSIAHSIRSHHTH) are enriched in basic residues.

Belongs to the DSH family. In terms of tissue distribution, expressed throughout the epidermis.

Its subcellular location is the cytoplasm. Functionally, involved in the signal transduction pathway mediated by multiple Wnt genes. Required during ciliogenesis for the docking of basal bodies to the apical plasma membrane. The polypeptide is Segment polarity protein dishevelled homolog DVL-3 (Xenopus laevis (African clawed frog)).